A 515-amino-acid chain; its full sequence is Zinc-binding protein AdcA (515 aa).

A signal peptide spans 1 to 28; the sequence is MKKKILLMMSLISVFFAWQLTQAKQVLA. His-66 lines the Zn(2+) pocket. The tract at residues 125 to 148 is disordered; sequence DHHHEDADKKHEHNKHSEEGHNHA. Residues 129-148 are his-rich loop; it reads EDADKKHEHNKHSEEGHNHA. His-152, His-216, and Glu-291 together coordinate Zn(2+).

It belongs to the bacterial solute-binding protein 9 family.

Its function is as follows. Part of the ATP-binding cassette (ABC) transport system AdcABC involved in zinc import. Binds zinc with high affinity and specificity and delivers it to the membrane permease for translocation into the cytoplasm. This chain is Zinc-binding protein AdcA (adcA), found in Streptococcus pyogenes serotype M1.